Consider the following 399-residue polypeptide: uncharacterized protein (399 aa).

The protein belongs to the NADH:flavin oxidoreductase/NADH oxidase family. As to quaternary structure, directly interacts with lipoylated GcvH-L (SpyM50867).

This is an uncharacterized protein from Streptococcus pyogenes serotype M5 (strain Manfredo).